Consider the following 199-residue polypeptide: Recombination protein RecR (199 aa).

A C4-type zinc finger spans residues 58–73 (CSACGNVDTQDPCAIC). The Toprim domain occupies 81–176 (HILCIVEEVG…SVSRLAHGVP (96 aa)).

This sequence belongs to the RecR family.

May play a role in DNA repair. It seems to be involved in an RecBC-independent recombinational process of DNA repair. It may act with RecF and RecO. The sequence is that of Recombination protein RecR from Parvibaculum lavamentivorans (strain DS-1 / DSM 13023 / NCIMB 13966).